The primary structure comprises 2603 residues: Protein SABRE (2603 aa).

Positions 1-35 (MAASPAKFFFGFLIVSIVLWMIFMLFAWMLSRVLG) are cleaved as a signal peptide. N196 carries N-linked (GlcNAc...) asparagine glycosylation. Residues 259 to 287 (FPKSKQSSASLRSDEVRTSATAASSAKKP) form a disordered region. Residues N331, N486, N597, N807, N867, N887, N1154, N1249, N1280, and N1408 are each glycosylated (N-linked (GlcNAc...) asparagine). The disordered stretch occupies residues 786-814 (PESGCNKGISSVKDGGPSEKINQSNSVNK). The segment at 1416–1436 (FHQSPSSTEHPTDVGTVYSSQ) is disordered. 2 N-linked (GlcNAc...) asparagine glycosylation sites follow: N1492 and N1659. Disordered stretches follow at residues 1656–1676 (EFENGSESDEHIRSDPSDDDG) and 1717–1777 (EPPK…DDIG). Over residues 1731 to 1748 (KIHEENQKESCPETHQGE) the composition is skewed to basic and acidic residues. The segment covering 1749–1766 (MSRSSASPGRNLPSSPSH) has biased composition (polar residues). Positions 1995-2023 (VEEVELAKINLEEKERERKLLLDDIRKLS) form a coiled coil. An N-linked (GlcNAc...) asparagine glycan is attached at N2333. Disordered regions lie at residues 2339–2380 (EQQE…RPRK), 2448–2479 (GKKFKDKSHNNRESTDNDLNLSDNDQTGKPDQ), and 2554–2603 (IRRH…DFRE). The span at 2343–2380 (DFSKQKVKEIKPVKSGRSSHEEKKAGKSHEEKKSRPRK) shows a compositional bias: basic and acidic residues. A glycan (N-linked (GlcNAc...) asparagine) is linked at N2467. Basic residues predominate over residues 2554–2565 (IRRHTKKFRPRS). Positions 2566–2583 (QRGSTSQQRESLPSSPIE) are enriched in polar residues. The span at 2586–2603 (PFESGYSSGSSPYEDFRE) shows a compositional bias: low complexity.

The protein belongs to the SABRE family. Highest levels in leaves, also expressed in leaves, flowers, and siliques, and, to a lower extent, in roots and stems.

It localises to the secreted. The protein resides in the golgi apparatus. Functionally, may be involved in membrane trafficking. Required for cell expansion, especially in root cortex, probably by counteracting the action of ethylene in promoting cells radial expansion. Involved in female organ development. Antagonistically interacts with ethylene signaling to regulate plant responses to Pi starvation. This is Protein SABRE from Arabidopsis thaliana (Mouse-ear cress).